A 2225-amino-acid polypeptide reads, in one-letter code: Nonribisomal peptide synthetase notE' (2225 aa).

The segment at 24-59 (TVRESLSSSPSPLPSLASPVSSGSEPPAFGETQPQS) is disordered. Low complexity predominate over residues 28–49 (SLSSSPSPLPSLASPVSSGSEP). An adenylation 1 region spans residues 83–482 (QERCKEAPQS…GRRDGQLKIR (400 aa)). The Carrier 1 domain occupies 614–690 (SPTTATELML…EQAQRATPMT (77 aa)). S651 carries the O-(pantetheine 4'-phosphoryl)serine modification. Positions 730 to 1142 (EDIYPCTPLQ…DLASPLDQDL (413 aa)) are condensation 1. An adenylation 2 region spans residues 1164–1563 (AQAMQQPSRQ…GRRDTQVKVR (400 aa)). The 77-residue stretch at 1699 to 1775 (PVSHGAELRL…DLARCTGEEQ (77 aa)) folds into the Carrier 2 domain. The residue at position 1736 (S1736) is an O-(pantetheine 4'-phosphoryl)serine. The interval 1827 to 2138 (FAFHGEVSID…FILQHQNIDM (312 aa)) is condensation 2.

This sequence belongs to the NRP synthetase family.

It carries out the reaction L-proline + L-tryptophan + 2 ATP = brevianamide F + 2 AMP + 2 diphosphate + 2 H(+). It functions in the pathway alkaloid biosynthesis. Its function is as follows. Nonribisomal peptide synthetase; part of the gene cluster that mediates the biosynthesis of notoamide, a fungal indole alkaloid that belongs to a family of natural products containing a characteristic bicyclo[2.2.2]diazaoctane core. The first step of notoamide biosynthesis involves coupling of L-proline and L-tryptophan by the bimodular NRPS notE', to produce cyclo-L-tryptophan-L-proline called brevianamide F. The reverse prenyltransferase notF' then acts as a deoxybrevianamide E synthase and converts brevianamide F to deoxybrevianamide E via reverse prenylation at C-2 of the indole ring leading to the bicyclo[2.2.2]diazaoctane core. Deoxybrevianamide E is further hydroxylated at C-6 of the indole ring, likely catalyzed by the cytochrome P450 monooxygenase notG', to yield 6-hydroxy-deoxybrevianamide E. 6-hydroxy-deoxybrevianamide E is a specific substrate of the prenyltransferase notC' for normal prenylation at C-7 to produce 6-hydroxy-7-prenyl-deoxybrevianamide, also called notoamide S. As the proposed pivotal branching point in notoamide biosynthesis, notoamide S can be diverted to notoamide E through an oxidative pyran ring closure putatively catalyzed by either notH' cytochrome P450 monooxygenase or the notD' FAD-linked oxidoreductase. This step would be followed by an indole 2,3-epoxidation-initiated pinacol-like rearrangement catalyzed by the notB' FAD-dependent monooxygenase leading to the formation of notoamide C and notoamide D. On the other hand notoamide S is converted to notoamide T by notH' (or notD'), a bifunctional oxidase that also functions as the intramolecular Diels-Alderase responsible for generation of (-)-notoamide T. To generate antipodal (+)-notoaminide T, notH (or notD) in Aspergillus strain MF297-2 is expected to catalyze a Diels-Alder reaction leading to the opposite stereochemistry. The remaining oxidoreductase notD' (or notH') likely catalyzes the oxidative pyran ring formation to yield (-)-stephacidin A. The FAD-dependent monooxygenase notI' is highly similar to notB' and is predicted to catalyze a similar conversion from (-)-stephacidin A to (+)-notoamide B via the 2,3-epoxidation of (-)-stephacidin A followed by a pinacol-type rearrangement. Finally, it remains unclear which enzyme could be responsible for the final hydroxylation steps leading to notoamide A and sclerotiamide. The protein is Nonribisomal peptide synthetase notE' of Aspergillus versicolor.